The sequence spans 284 residues: D-tagatose-1,6-bisphosphate aldolase subunit GatY (284 aa).

Catalysis depends on Asp-82, which acts as the Proton donor. 2 residues coordinate Zn(2+): His-83 and His-180. Residue Gly-181 coordinates dihydroxyacetone phosphate. His-208 lines the Zn(2+) pocket. Dihydroxyacetone phosphate-binding positions include 209-211 (GAS) and 230-233 (NVAT).

The protein belongs to the class II fructose-bisphosphate aldolase family. TagBP aldolase GatY subfamily. In terms of assembly, forms a complex with GatZ. The cofactor is Zn(2+).

It catalyses the reaction D-tagatofuranose 1,6-bisphosphate = D-glyceraldehyde 3-phosphate + dihydroxyacetone phosphate. Its pathway is carbohydrate metabolism; D-tagatose 6-phosphate degradation; D-glyceraldehyde 3-phosphate and glycerone phosphate from D-tagatose 6-phosphate: step 2/2. Its function is as follows. Catalytic subunit of the tagatose-1,6-bisphosphate aldolase GatYZ, which catalyzes the reversible aldol condensation of dihydroxyacetone phosphate (DHAP or glycerone-phosphate) with glyceraldehyde 3-phosphate (G3P) to produce tagatose 1,6-bisphosphate (TBP). Requires GatZ subunit for full activity and stability. Is involved in the catabolism of galactitol and D-tagatose. The polypeptide is D-tagatose-1,6-bisphosphate aldolase subunit GatY (gatY) (Klebsiella oxytoca).